The sequence spans 641 residues: Chaperone protein DnaK (641 aa).

A Phosphothreonine; by autocatalysis modification is found at Thr199. The span at 603–613 (YTQQGGTAGSE) shows a compositional bias: polar residues. Residues 603-641 (YTQQGGTAGSETHSHEKAGGSGGDDVVDAEFEEVRDDKR) form a disordered region. The span at 627-641 (DVVDAEFEEVRDDKR) shows a compositional bias: acidic residues.

The protein belongs to the heat shock protein 70 family.

Functionally, acts as a chaperone. The protein is Chaperone protein DnaK of Methylococcus capsulatus (strain ATCC 33009 / NCIMB 11132 / Bath).